The primary structure comprises 165 residues: Small ribosomal subunit protein uS5 (165 aa).

Residues 13–76 (LEEKVLVVNR…DAARKNLVSI (64 aa)) enclose the S5 DRBM domain.

It belongs to the universal ribosomal protein uS5 family. In terms of assembly, part of the 30S ribosomal subunit. Contacts proteins S4 and S8.

In terms of biological role, with S4 and S12 plays an important role in translational accuracy. Functionally, located at the back of the 30S subunit body where it stabilizes the conformation of the head with respect to the body. The protein is Small ribosomal subunit protein uS5 of Chlamydia muridarum (strain MoPn / Nigg).